The chain runs to 104 residues: Nucleoid-associated protein EF_2780 (104 aa).

This sequence belongs to the YbaB/EbfC family. In terms of assembly, homodimer.

Its subcellular location is the cytoplasm. It localises to the nucleoid. In terms of biological role, binds to DNA and alters its conformation. May be involved in regulation of gene expression, nucleoid organization and DNA protection. The polypeptide is Nucleoid-associated protein EF_2780 (Enterococcus faecalis (strain ATCC 700802 / V583)).